Here is a 429-residue protein sequence, read N- to C-terminus: MQVDELLKPFPIKEFHPFPRALLGPGAHEMIGPEALKLGFKKTLVMTSGLRGSDIVHKITESMKYHGLEVVLYDKVESNPKDYNVMDAVKLYQENKCDSFVSIGGGSSHDACKGARISVAHDGRNVNDFEGFNKSENPRNPPHIAVSTTAGTGSETSWAYVITDTTTDPDNPHKYVAFDDASVATLAIDDPVLYYSCPIDYTAQCGFDVLAHASEPYVSRLNFEPSLGNALRAIKLTAENLRQATWNPSELSGREGMMYAQYIAAQAFNSGGLGIIHSISHAVSAFYDTHHGLNNAIALPRVWAFNMPVAYKRFADMAEAMGVDTHGMTDVQAADALAAAIRLLRDVGIPEKFTDVTQDSYSKNRLGQGPTKFYEQASVIKGDDEDVDRITNHVLGDACTPGNAKECTFETVRPVVDHCMNGDLDDLLS.

The protein belongs to the iron-containing alcohol dehydrogenase family. Homodecamer. Mg(2+) serves as cofactor. The cofactor is Zn(2+). Requires NADPH as cofactor.

The catalysed reaction is methanol + A = formaldehyde + AH2. Its activity is regulated as follows. Inhibited by azide and hydrazine. In terms of biological role, catalyzes the oxidation of methanol to yield formaldehyde. While the in vivo electron acceptor is not known, N,N-dimethyl-4-nitrosoaniline (NDMA) can serve this function in vitro and is reduced to 4-(hydroxylamino)-N,N-dimethylaniline. It can also use various other primary alcohols, polyols and formaldehyde. In addition, MNO is able to produce methylformate from methanol plus formaldehyde, and possesses a formaldehyde dismutase and a NADH-dependent formaldehyde reductase activity. In Amycolatopsis methanolica, this protein is Methanol:N,N-dimethyl-4-nitrosoaniline oxidoreductase (mno).